A 382-amino-acid chain; its full sequence is uncharacterized protein (382 aa).

A run of 12 helical transmembrane segments spans residues 14-34, 45-65, 79-99, 102-122, 131-151, 157-177, 204-224, 235-255, 270-290, 291-311, 325-345, and 348-368; these read GLLLLTLAIAVLNTLVPLWLA, VVSSSYFTGNLVGTLLTGYVI, FIFAAGCAGLGLMIGFWSWLA, FVAGVGCAMIWVVVESALMCS, LLAAYMMVYYVGTFLGQLLVS, LMSVLPWVTGLTLAGILPLLF, LGVNGCIISGIVLGSLYGLMP, ASIGFWMAVLVSAGILGQWPI, VQVFVVILGSIAMLSQAAMAP, ALFILGAAGFTLYPVAMAWAC, ALLLSYTVGSLLGPSFTAMLM, and FSDNLLFIMIASVSFIYLLML.

It belongs to the major facilitator superfamily. YcaD (TC 2.A.1.26) family.

The protein resides in the cell inner membrane. This is an uncharacterized protein from Escherichia coli O7:K1 (strain IAI39 / ExPEC).